Here is a 185-residue protein sequence, read N- to C-terminus: Photosystem I assembly protein Ycf4 (185 aa).

2 consecutive transmembrane segments (helical) span residues 24–44 (YIIG…SISS) and 66–86 (IIMG…WYLV).

The protein belongs to the Ycf4 family.

It is found in the cellular thylakoid membrane. Seems to be required for the assembly of the photosystem I complex. This Prochlorococcus marinus (strain AS9601) protein is Photosystem I assembly protein Ycf4.